A 303-amino-acid chain; its full sequence is Putative HTH-type transcriptional regulatory protein Mpal_0031 (303 aa).

The region spanning L132 to L189 is the HTH cro/C1-type domain. The segment at residues L143–S162 is a DNA-binding region (H-T-H motif).

This Methanosphaerula palustris (strain ATCC BAA-1556 / DSM 19958 / E1-9c) protein is Putative HTH-type transcriptional regulatory protein Mpal_0031.